The chain runs to 118 residues: Large ribosomal subunit protein bL20 (118 aa).

The protein belongs to the bacterial ribosomal protein bL20 family.

Binds directly to 23S ribosomal RNA and is necessary for the in vitro assembly process of the 50S ribosomal subunit. It is not involved in the protein synthesizing functions of that subunit. In Sulfurihydrogenibium sp. (strain YO3AOP1), this protein is Large ribosomal subunit protein bL20.